The primary structure comprises 43 residues: Protein PsbN (43 aa).

Residues 4 to 24 form a helical membrane-spanning segment; it reads AIVLIISVGAALVAVTGYGIY.

The protein belongs to the PsbN family.

The protein resides in the cellular thylakoid membrane. Functionally, may play a role in photosystem I and II biogenesis. This Trichormus variabilis (strain ATCC 29413 / PCC 7937) (Anabaena variabilis) protein is Protein PsbN.